The primary structure comprises 144 residues: Glycophorin-A (144 aa).

The span at 1-25 (SSTTVPATHTSSSSLGPEQYVSSQS) shows a compositional bias: polar residues. Residues 1-55 (SSTTVPATHTSSSSLGPEQYVSSQSNDKHTSDSHPTPTSAHEVTTEFSGRTHYPP) are disordered. Residue S2 is glycosylated (O-linked (GalNAc...) serine). 4 O-linked (GalNAc...) threonine glycosylation sites follow: T3, T4, T8, and T10. S11, S12, S13, S14, S22, and S23 each carry an O-linked (GalNAc...) serine glycan. 5 O-linked (GalNAc...) threonine glycosylation sites follow: T30, T36, T38, T44, and T45. Positions 33–48 (SHPTPTSAHEVTTEFS) are enriched in polar residues. Residue S48 is glycosylated (O-linked (GalNAc...) serine). Residue T51 is glycosylated (O-linked (GalNAc...) threonine). The helical transmembrane segment at 70-92 (LVIALIIFGVMAGVIGTILFISY) threads the bilayer. The segment at 101-144 (SESDVQPLPPPDAEVPLSSVEIEDPEETDELNSFTKPNQERNES) is disordered. S118 bears the Phosphoserine mark. The segment covering 121-130 (EIEDPEETDE) has biased composition (acidic residues).

The protein belongs to the glycophorin-A family. As to quaternary structure, homodimer. Component of the ankyrin-1 complex in the erythrocyte, composed of ANK1, RHCE, RHAG, SLC4A1, EPB42, GYPA, GYPB and AQP1. Interacts with SLC4A1; a GYPA monomer is bound at each end of the SLC4A1 dimer forming a heterotetramer.

Its subcellular location is the membrane. In terms of biological role, component of the ankyrin-1 complex, a multiprotein complex involved in the stability and shape of the erythrocyte membrane. Glycophorin A is the major intrinsic membrane protein of the erythrocyte. The N-terminal glycosylated segment, which lies outside the erythrocyte membrane, has MN blood group receptors. Appears to be important for the function of SLC4A1 and is required for high activity of SLC4A1. May be involved in translocation of SLC4A1 to the plasma membrane. This is Glycophorin-A from Macaca fuscata fuscata (Japanese macaque).